We begin with the raw amino-acid sequence, 426 residues long: Mothers against decapentaplegic homolog 7 (426 aa).

Residues 14–42 (WRSRAPGGEDEEEGVGGGGGGGELRGEGA) are disordered. Residues Lys-64 and Lys-70 each carry the N6-acetyllysine; alternate modification. Residues Lys-64 and Lys-70 each participate in a glycyl lysine isopeptide (Lys-Gly) (interchain with G-Cter in ubiquitin); alternate cross-link. The MH1 domain maps to 64–207 (KAVRGAKGHH…LSRLCELESP (144 aa)). The span at 67–76 (RGAKGHHHPH) shows a compositional bias: basic residues. The tract at residues 67-87 (RGAKGHHHPHPPTSGAGAAGG) is disordered. 4 residues coordinate Zn(2+): Cys-125, Cys-180, Cys-192, and His-197. Positions 208–211 (PPPY) match the PY-motif motif. The important for interaction with SMURF2 stretch occupies residues 208-217 (PPPYSRYPMD). Position 249 is a phosphoserine (Ser-249). One can recognise an MH2 domain in the interval 261–426 (WCVVAYWEEK…CWLEVIFNSR (166 aa)).

It belongs to the dwarfin/SMAD family. In terms of assembly, interacts with COPS5. Interacts with STAMBP. Interacts with PPP1R15A. Interacts with NEDD4L. Interacts with RNF111, AXIN1 and AXIN2. Interacts with ACVR1B, SMURF1, SMURF2 and TGFBR1; SMAD7 recruits SMURF1 and SMURF2 to the TGF-beta receptor and regulates its degradation. Interacts with WWP1. Interacts with PDPK1 (via PH domain). Ubiquitinated by WWP1. Interacts with TSC22D1/TSC-22; the interaction requires TGF-beta and the interaction is inhibited by TGFBR1. Post-translationally, phosphorylation on Ser-249 does not affect its stability, nuclear localization or inhibitory function in TGFB signaling; however it affects its ability to regulate transcription. Phosphorylated by PDPK1. Ubiquitinated by WWP1. Polyubiquitinated by RNF111, which is enhanced by AXIN1 and promotes proteasomal degradation. In response to TGF-beta, ubiquitinated by SMURF1; which promotes its degradation. Ubiquitinated by ARK2C, promoting proteasomal degradation, leading to enhance the BMP-Smad signaling. In terms of processing, acetylation prevents ubiquitination and degradation mediated by SMURF1. As to expression, ubiquitous in various organs, with higher levels in brain and kidney.

The protein resides in the nucleus. It is found in the cytoplasm. Its function is as follows. Antagonist of signaling by TGF-beta (transforming growth factor) type 1 receptor superfamily members; has been shown to inhibit TGF-beta (Transforming growth factor) and activin signaling by associating with their receptors thus preventing SMAD2 access. Functions as an adapter to recruit SMURF2 to the TGF-beta receptor complex. Also acts by recruiting the PPP1R15A-PP1 complex to TGFBR1, which promotes its dephosphorylation. Positively regulates PDPK1 kinase activity by stimulating its dissociation from the 14-3-3 protein YWHAQ which acts as a negative regulator. The protein is Mothers against decapentaplegic homolog 7 (Smad7) of Mus musculus (Mouse).